The chain runs to 465 residues: Mitochondrial-processing peptidase subunit beta (465 aa).

Residue His79 participates in Zn(2+) binding. The active-site Proton acceptor is the Glu82. Zn(2+)-binding residues include His83 and Glu159.

The protein belongs to the peptidase M16 family. In terms of assembly, heterodimer of an alpha subunit and a beta subunit subunits, forming the mitochondrial processing protease (MPP) in which the alpha subunit is involved in substrate recognition and binding and the beta subunit is the catalytic subunit. The cofactor is Zn(2+).

The protein resides in the mitochondrion matrix. It catalyses the reaction Release of N-terminal transit peptides from precursor proteins imported into the mitochondrion, typically with Arg in position P2.. Its activity is regulated as follows. Binding to the alpha subunit is required for catalytic activity. Its function is as follows. Catalytic subunit of the essential mitochondrial processing protease (MPP), which cleaves the mitochondrial sequence off newly imported precursors proteins. Preferentially, cleaves after an arginine at position P2. This chain is Mitochondrial-processing peptidase subunit beta (MPP1), found in Blastocladiella emersonii (Aquatic fungus).